The chain runs to 555 residues: Glutamine--tRNA ligase (555 aa).

Residues 34–44 (PEPNGYLHIGH) carry the 'HIGH' region motif. Residues 35 to 37 (EPN) and 41 to 47 (HIGHAKS) contribute to the ATP site. Residues Asp-67 and Tyr-212 each coordinate L-glutamine. ATP-binding positions include Thr-231, 261–262 (RL), and 269–271 (MSK). Positions 268–272 (VMSKR) match the 'KMSKS' region motif. The interaction with tRNA stretch occupies residues 317 to 324 (TKQDNTIE).

It belongs to the class-I aminoacyl-tRNA synthetase family. In terms of assembly, monomer.

The protein resides in the cytoplasm. It carries out the reaction tRNA(Gln) + L-glutamine + ATP = L-glutaminyl-tRNA(Gln) + AMP + diphosphate. The sequence is that of Glutamine--tRNA ligase from Salmonella newport (strain SL254).